We begin with the raw amino-acid sequence, 421 residues long: Acyl-coenzyme A thioesterase 1 (421 aa).

Active-site charge relay system residues include Ser232, Asp326, and His360.

The protein belongs to the C/M/P thioester hydrolase family. In terms of assembly, monomer.

It is found in the cytoplasm. Its subcellular location is the cytosol. It carries out the reaction hexadecanoyl-CoA + H2O = hexadecanoate + CoA + H(+). The enzyme catalyses decanoyl-CoA + H2O = decanoate + CoA + H(+). It catalyses the reaction dodecanoyl-CoA + H2O = dodecanoate + CoA + H(+). The catalysed reaction is tetradecanoyl-CoA + H2O = tetradecanoate + CoA + H(+). It carries out the reaction octadecanoyl-CoA + H2O = octadecanoate + CoA + H(+). The enzyme catalyses eicosanoyl-CoA + H2O = eicosanoate + CoA + H(+). It catalyses the reaction (9Z)-octadecenoyl-CoA + H2O = (9Z)-octadecenoate + CoA + H(+). The catalysed reaction is (9Z)-hexadecenoyl-CoA + H2O = (9Z)-hexadecenoate + CoA + H(+). It carries out the reaction (9E)-octadecenoyl-CoA + H2O = (9E)-octadecenoate + CoA + H(+). The protein operates within lipid metabolism; fatty acid metabolism. Functionally, catalyzes the hydrolysis of acyl-CoAs into free fatty acids and coenzyme A (CoASH), regulating their respective intracellular levels. More active towards saturated and unsaturated long chain fatty acyl-CoAs (C12-C20). The chain is Acyl-coenzyme A thioesterase 1 (ACOT1) from Homo sapiens (Human).